Consider the following 72-residue polypeptide: Cytochrome b-c1 complex subunit 8 (72 aa).

The Mitochondrial matrix segment spans residues 2–41; it reads GKQPVKLKAVVYAISPFQQKIMPGLWKDLPGKIHHKVSEN. The chain crosses the membrane as a helical span at residues 42–59; sequence WISATLLLGPLVGTYSYV. Over 60-72 the chain is Mitochondrial intermembrane; the sequence is QHFLEKEKLEHRY.

This sequence belongs to the UQCRQ/QCR8 family. Component of the ubiquinol-cytochrome c oxidoreductase (cytochrome b-c1 complex, complex III, CIII), a multisubunit enzyme composed of 3 respiratory subunits cytochrome b, cytochrome c1 and Rieske protein, 2 core protein subunits, and additional low-molecular weight protein subunits. The complex exists as an obligatory dimer and forms supercomplexes (SCs) in the inner mitochondrial membrane with cytochrome c oxidase (complex IV, CIV).

It is found in the mitochondrion inner membrane. Its function is as follows. Component of the ubiquinol-cytochrome c oxidoreductase, a multisubunit transmembrane complex that is part of the mitochondrial electron transport chain which drives oxidative phosphorylation. The respiratory chain contains 3 multisubunit complexes succinate dehydrogenase (complex II, CII), ubiquinol-cytochrome c oxidoreductase (cytochrome b-c1 complex, complex III, CIII) and cytochrome c oxidase (complex IV, CIV), that cooperate to transfer electrons derived from NADH and succinate to molecular oxygen, creating an electrochemical gradient over the inner membrane that drives transmembrane transport and the ATP synthase. The cytochrome b-c1 complex catalyzes electron transfer from ubiquinol to cytochrome c, linking this redox reaction to translocation of protons across the mitochondrial inner membrane, with protons being carried across the membrane as hydrogens on the quinol. In the process called Q cycle, 2 protons are consumed from the matrix, 4 protons are released into the intermembrane space and 2 electrons are passed to cytochrome c. This Solanum tuberosum (Potato) protein is Cytochrome b-c1 complex subunit 8.